Consider the following 224-residue polypeptide: 7-cyano-7-deazaguanine synthase (224 aa).

Residue 10–20 participates in ATP binding; the sequence is LSGGLDSATVV. Residues Cys-189, Cys-199, Cys-202, and Cys-205 each contribute to the Zn(2+) site.

The protein belongs to the QueC family. Requires Zn(2+) as cofactor.

The catalysed reaction is 7-carboxy-7-deazaguanine + NH4(+) + ATP = 7-cyano-7-deazaguanine + ADP + phosphate + H2O + H(+). The protein operates within purine metabolism; 7-cyano-7-deazaguanine biosynthesis. Its function is as follows. Catalyzes the ATP-dependent conversion of 7-carboxy-7-deazaguanine (CDG) to 7-cyano-7-deazaguanine (preQ(0)). The chain is 7-cyano-7-deazaguanine synthase from Pseudomonas putida (strain ATCC 700007 / DSM 6899 / JCM 31910 / BCRC 17059 / LMG 24140 / F1).